A 308-amino-acid polypeptide reads, in one-letter code: Oxygen-dependent coproporphyrinogen-III oxidase (308 aa).

Residue serine 92 participates in substrate binding. Residues histidine 96 and histidine 106 each contribute to the a divalent metal cation site. Histidine 106 acts as the Proton donor in catalysis. Position 108–110 (108–110) interacts with substrate; the sequence is NVR. A divalent metal cation contacts are provided by histidine 145 and histidine 175. Positions 240–275 are important for dimerization; that stretch reads YVEFNLVWDRGTLFGLQTGGRTESILMSMPPLVRWE. 258-260 is a binding site for substrate; the sequence is GGR.

The protein belongs to the aerobic coproporphyrinogen-III oxidase family. As to quaternary structure, homodimer. A divalent metal cation serves as cofactor.

It localises to the cytoplasm. The enzyme catalyses coproporphyrinogen III + O2 + 2 H(+) = protoporphyrinogen IX + 2 CO2 + 2 H2O. It participates in porphyrin-containing compound metabolism; protoporphyrin-IX biosynthesis; protoporphyrinogen-IX from coproporphyrinogen-III (O2 route): step 1/1. In terms of biological role, involved in the heme biosynthesis. Catalyzes the aerobic oxidative decarboxylation of propionate groups of rings A and B of coproporphyrinogen-III to yield the vinyl groups in protoporphyrinogen-IX. The chain is Oxygen-dependent coproporphyrinogen-III oxidase from Salmonella paratyphi A (strain ATCC 9150 / SARB42).